Reading from the N-terminus, the 227-residue chain is Glutathione S-transferase U13 (227 aa).

The GST N-terminal domain maps to aspartate 5–proline 86. Residues serine 15–proline 16, glutamate 43–lysine 44, lysine 57–valine 58, and glutamate 70–serine 71 contribute to the glutathione site. The GST C-terminal domain maps to aspartate 92–phenylalanine 224. Threonine 158 carries the post-translational modification Phosphothreonine.

This sequence belongs to the GST superfamily. Tau family.

It is found in the cytoplasm. It localises to the cytosol. It catalyses the reaction RX + glutathione = an S-substituted glutathione + a halide anion + H(+). Functionally, in vitro, possesses glutathione S-transferase activity toward 1-chloro-2,4-dinitrobenzene (CDNB) and benzyl isothiocyanate (BITC). May be involved in the conjugation of reduced glutathione to a wide number of exogenous and endogenous hydrophobic electrophiles and have a detoxification role against certain herbicides. The sequence is that of Glutathione S-transferase U13 (GSTU13) from Arabidopsis thaliana (Mouse-ear cress).